A 344-amino-acid polypeptide reads, in one-letter code: Dihydroorotase (344 aa).

2 residues coordinate Zn(2+): histidine 14 and histidine 16. Substrate is bound by residues 16 to 18 and asparagine 42; that span reads HFR. Zn(2+) contacts are provided by lysine 100, histidine 137, and histidine 175. Lysine 100 is subject to N6-carboxylysine. Residue histidine 137 coordinates substrate. Leucine 220 lines the substrate pocket. Aspartate 248 contributes to the Zn(2+) binding site. Aspartate 248 is an active-site residue. Substrate contacts are provided by histidine 252 and alanine 264.

The protein belongs to the metallo-dependent hydrolases superfamily. DHOase family. Class II DHOase subfamily. In terms of assembly, homodimer. The cofactor is Zn(2+).

The enzyme catalyses (S)-dihydroorotate + H2O = N-carbamoyl-L-aspartate + H(+). The protein operates within pyrimidine metabolism; UMP biosynthesis via de novo pathway; (S)-dihydroorotate from bicarbonate: step 3/3. Catalyzes the reversible cyclization of carbamoyl aspartate to dihydroorotate. The chain is Dihydroorotase from Alcanivorax borkumensis (strain ATCC 700651 / DSM 11573 / NCIMB 13689 / SK2).